Consider the following 80-residue polypeptide: Pigment-dispersing hormone peptides (80 aa).

A signal peptide spans 1–20; the sequence is MANYITIAIIVGIVCGQALS. Positions 21-58 are excised as a propeptide; the sequence is VEDVDRNLLELNLPYGRGLDSELQLARLMLAAPRFCHP. The residue at position 78 (Ala-78) is an Alanine amide.

The protein belongs to the arthropod PDH family. Expressed in the brain (at protein level).

The protein localises to the secreted. Its function is as follows. Neuropeptide PDF is the main transmitter regulating circadian locomotor rhythms. This chain is Pigment-dispersing hormone peptides, found in Camponotus floridanus (Florida carpenter ant).